The chain runs to 253 residues: Acetylglutamate kinase (253 aa).

Substrate is bound by residues 40–41, Arg-62, and Asn-154; that span reads GG.

It belongs to the acetylglutamate kinase family. ArgB subfamily.

It localises to the cytoplasm. The enzyme catalyses N-acetyl-L-glutamate + ATP = N-acetyl-L-glutamyl 5-phosphate + ADP. Its pathway is amino-acid biosynthesis; L-arginine biosynthesis; N(2)-acetyl-L-ornithine from L-glutamate: step 2/4. Functionally, catalyzes the ATP-dependent phosphorylation of N-acetyl-L-glutamate. The polypeptide is Acetylglutamate kinase (Staphylococcus saprophyticus subsp. saprophyticus (strain ATCC 15305 / DSM 20229 / NCIMB 8711 / NCTC 7292 / S-41)).